The primary structure comprises 352 residues: C-C chemokine receptor type 5 (352 aa).

Topologically, residues 1-30 (MDYQVSSPTYDIDYYTSEPCQKINVKQIAA) are extracellular. Tyr-3 carries the post-translational modification Sulfotyrosine. O-linked (GalNAc...) serine glycans are attached at residues Ser-6 and Ser-7. Residues Tyr-10, Tyr-14, and Tyr-15 each carry the sulfotyrosine modification. 2 disulfide bridges follow: Cys-20–Cys-269 and Cys-101–Cys-178. Residues 31–58 (RLLPPLYSLVFIFGFVGNILVVLILINC) form a helical membrane-spanning segment. At 59–68 (KRLKSMTDIY) the chain is on the cytoplasmic side. A helical membrane pass occupies residues 69-89 (LLNLAISDLLFLLTVPFWAHY). Topologically, residues 90 to 102 (AAAQWDFGNTMCQ) are extracellular. The chain crosses the membrane as a helical span at residues 103 to 124 (LLTGLYFIGFFSGIFFIILLTI). Residues 125-141 (DRYLAIVHAVFALKART) lie on the Cytoplasmic side of the membrane. Residues 142–166 (VTFGVVTSVITWVVAVFASLPRIIF) form a helical membrane-spanning segment. The Extracellular portion of the chain corresponds to 167 to 198 (TTSHRERLHYTCSSHFPYSQYQFWKNFHTLKI). A helical transmembrane segment spans residues 199 to 218 (VILGLVLPLLVMVICYSGIL). Residues 219–235 (KTLLRCRNEKKRHRAVR) are Cytoplasmic-facing. A helical transmembrane segment spans residues 236–260 (LIFTIMIVYFLFWAPYNIVLLLNTF). The Extracellular portion of the chain corresponds to 261-277 (QEFFGLNNCSSSNRLDQ). Residues 278-301 (AMQVTETLGMTHCCINPIIYAFVG) form a helical membrane-spanning segment. At 302 to 352 (EKFRNYLLVFFQKHIAKRFCKCCSIFQQEAPERASSVYTRSTGEQEISVGL) the chain is on the cytoplasmic side. S-palmitoyl cysteine attachment occurs at residues Cys-321, Cys-323, and Cys-324. Phosphoserine; by BARK1 occurs at positions 336, 337, 342, and 349.

It belongs to the G-protein coupled receptor 1 family. As to quaternary structure, interacts with PRAF2. Efficient ligand binding to CCL3/MIP-1alpha and CCL4/MIP-1beta requires sulfation, O-glycosylation and sialic acid modifications. Glycosylation on Ser-6 is required for efficient binding of CCL4. Interacts with GRK2. Interacts with ARRB1 and ARRB2. Interacts with CNIH4. Interacts with S100A4; this interaction stimulates T-lymphocyte chemotaxis. Sulfated on at least 2 of the N-terminal tyrosines. Sulfation is required for efficient binding of the chemokines, CCL3 and CCL4. In terms of processing, palmitoylation in the C-terminal is important for cell surface expression. Post-translationally, phosphorylation on serine residues in the C-terminal is stimulated by binding CC chemokines especially by APO-RANTES. O-glycosylated, but not N-glycosylated. Ser-6 appears to be the major site even if Ser-7 may be also O-glycosylated. Also sialylated glycans present which contribute to chemokine binding. Thr-16 and Ser-17 may also be glycosylated and, if so, with small moieties such as a T-antigen.

It is found in the cell membrane. Receptor for a number of inflammatory CC-chemokines including CCL3/MIP-1-alpha, CCL4/MIP-1-beta and RANTES and subsequently transduces a signal by increasing the intracellular calcium ion level. May play a role in the control of granulocytic lineage proliferation or differentiation. Participates in T-lymphocyte migration to the infection site by acting as a chemotactic receptor. In Cercopithecus ascanius (Black-cheeked white-nosed monkey), this protein is C-C chemokine receptor type 5 (CCR5).